The chain runs to 376 residues: MAGQIDPIRAELVGWTPRVPRNLLASLPPLGRKTAPKLPQNISFSPPLSAHPCYQCQEKCLPHRRPVSWSPLILQRCRLRCLPRGHPLKISRTFELPVGERDGSHPLTAFARAPRTTEPRSLHYLYDSLPPTPALCAQLLFHQLIQGHFSFVVHPTVATAPRSIWPAKMSRFSTGRLLAQNLFQAFNKPVFPSATPVWTRAFSQTAARRDADSESSAKLMESLTRGIVGMAADPTDLTGDKLATNIGLRDTEDEPYHFHIYSHKHNTHITVTKPNRDALISLSCGNLGFKKSNRKHYDSAYQLGAYVVDKMHQMNLHNKIKKMEVVLRGFGPGREAVIKVLLGNEGRMLRSSIVRVSDATRLKFGGTRSKKPRRLG.

The protein belongs to the universal ribosomal protein uS11 family. As to quaternary structure, component of the mitochondrial small ribosomal subunit (mt-SSU). Mature N.crassa 74S mitochondrial ribosomes consist of a small (37S) and a large (54S) subunit. The 37S small subunit contains a 16S ribosomal RNA (16S mt-rRNA) and 32 different proteins. The 54S large subunit contains a 23S rRNA (23S mt-rRNA) and 42 different proteins.

It is found in the mitochondrion. Component of the mitochondrial ribosome (mitoribosome), a dedicated translation machinery responsible for the synthesis of mitochondrial genome-encoded proteins, including at least some of the essential transmembrane subunits of the mitochondrial respiratory chain. The mitoribosomes are attached to the mitochondrial inner membrane and translation products are cotranslationally integrated into the membrane. This Neurospora crassa (strain ATCC 24698 / 74-OR23-1A / CBS 708.71 / DSM 1257 / FGSC 987) protein is Small ribosomal subunit protein uS11m (mrps18).